Reading from the N-terminus, the 98-residue chain is Cystatin-B (98 aa).

N-acetylmethionine is present on Met-1. A Secondary area of contact motif is present at residues 46–50 (QLVAG).

Belongs to the cystatin family. Able to form dimers stabilized by noncovalent forces.

Its subcellular location is the cytoplasm. Functionally, this is an intracellular thiol proteinase inhibitor. The protein is Cystatin-B (CSTB) of Bos taurus (Bovine).